Reading from the N-terminus, the 182-residue chain is MVGQMKSFLFLFVFLVLTKTVISARKPSKSQPKPCKNFVLYYHDIMFGVDDVQNATSAAVTNPPGLGNFKFGKLVIFDDPMTIDKNFQSEPVARAQGFYFYDMKNDYNAWFAYTLVFNSTQHKGTLNIMGADLMMVQSRDLSVVGGTGDFFMSRGIVTFETDTFEGAKYFRVKMDIKLYECY.

A signal peptide spans 1–23 (MVGQMKSFLFLFVFLVLTKTVIS). A disulfide bond links cysteine 35 and cysteine 181. Residues asparagine 54 and asparagine 118 are each glycosylated (N-linked (GlcNAc...) asparagine).

This sequence belongs to the plant dirigent protein family. In terms of assembly, homodimer. Confined to shoot meristem, vascular region of cotyledons and siliques abscission zone.

The protein resides in the secreted. Its subcellular location is the extracellular space. It localises to the apoplast. Functionally, dirigent proteins impart stereoselectivity on the phenoxy radical-coupling reaction, yielding optically active lignans from two molecules of coniferyl alcohol in the biosynthesis of lignans, flavonolignans, and alkaloids and thus plays a central role in plant secondary metabolism. Enantiocomplementary dirigent protein that mediates the laccase-catalyzed enantioselective oxidative phenol coupling of (E)-coniferyl alcohol to (-)-pinoresinol. This chain is Dirigent protein 5 (DIR5), found in Arabidopsis thaliana (Mouse-ear cress).